Reading from the N-terminus, the 213-residue chain is Protein-L-isoaspartate O-methyltransferase (213 aa).

Ser61 is an active-site residue.

The protein belongs to the methyltransferase superfamily. L-isoaspartyl/D-aspartyl protein methyltransferase family.

The protein localises to the cytoplasm. The catalysed reaction is [protein]-L-isoaspartate + S-adenosyl-L-methionine = [protein]-L-isoaspartate alpha-methyl ester + S-adenosyl-L-homocysteine. Catalyzes the methyl esterification of L-isoaspartyl residues in peptides and proteins that result from spontaneous decomposition of normal L-aspartyl and L-asparaginyl residues. It plays a role in the repair and/or degradation of damaged proteins. The chain is Protein-L-isoaspartate O-methyltransferase from Petrotoga mobilis (strain DSM 10674 / SJ95).